A 215-amino-acid chain; its full sequence is Vesicle-trafficking protein SEC22b (215 aa).

Residues 1–194 (MVLLTMIARV…KYLNMRSTYA (194 aa)) are Cytoplasmic-facing. A Longin domain is found at 6-119 (MIARVADGLP…YSFIEFDTFI (114 aa)). Lysine 38 is subject to N6-acetyllysine. The v-SNARE coiled-coil homology domain maps to 134 to 194 (NLGSINTELQ…KYLNMRSTYA (61 aa)). At serine 137 the chain carries Phosphoserine. A Phosphothreonine modification is found at threonine 140. Phosphoserine is present on residues serine 164, serine 168, serine 174, and serine 177. The helical; Anchor for type IV membrane protein transmembrane segment at 195–215 (KLAAVAVFFIMLIVYVRFWWL) threads the bilayer.

It belongs to the synaptobrevin family. As to quaternary structure, interacts with STX17. Component of two distinct SNARE complexes consisting of STX5, GOSR2/BOS1, BET1 and SEC22B or STX18, USE1L, BNIP1/SEC20L and SEC22B. YKT6 can probably replace SEC22B as subunit of either complex. Interacts with the COPII Sec23/24 complex composed of SEC23A and SEC24A; recruits SEC22B into COPII-coated vesicles to allow its transport from the endoplasmic reticulum to the Golgi. Interacts with BET1.

The protein resides in the endoplasmic reticulum membrane. It localises to the endoplasmic reticulum-Golgi intermediate compartment membrane. Its subcellular location is the golgi apparatus. The protein localises to the cis-Golgi network membrane. It is found in the trans-Golgi network membrane. The protein resides in the melanosome. SNARE involved in targeting and fusion of ER-derived transport vesicles with the Golgi complex as well as Golgi-derived retrograde transport vesicles with the ER. The protein is Vesicle-trafficking protein SEC22b (Sec22b) of Cricetulus griseus (Chinese hamster).